Reading from the N-terminus, the 692-residue chain is Elongation factor G (692 aa).

The tr-type G domain maps to 8–282 (EKTRNIGIMA…AVIDYLPSPL (275 aa)). Residues 17–24 (AHVDAGKT), 81–85 (DTPGH), and 135–138 (NKMD) each bind GTP.

This sequence belongs to the TRAFAC class translation factor GTPase superfamily. Classic translation factor GTPase family. EF-G/EF-2 subfamily.

Its subcellular location is the cytoplasm. Its function is as follows. Catalyzes the GTP-dependent ribosomal translocation step during translation elongation. During this step, the ribosome changes from the pre-translocational (PRE) to the post-translocational (POST) state as the newly formed A-site-bound peptidyl-tRNA and P-site-bound deacylated tRNA move to the P and E sites, respectively. Catalyzes the coordinated movement of the two tRNA molecules, the mRNA and conformational changes in the ribosome. In Streptococcus agalactiae serotype III (strain NEM316), this protein is Elongation factor G.